The primary structure comprises 217 residues: Probable rhamnogalacturonan acetylesterase YesY (217 aa).

The active-site Nucleophile is the serine 11. Residues glutamate 178 and histidine 185 contribute to the active site.

Belongs to the 'GDSL' lipolytic enzyme family.

In terms of biological role, may play a role in the degradation of rhamnogalacturonan derived from plant cell walls. Probably has broad substrate specificity and may degrade several types of acetylated substrates. This chain is Probable rhamnogalacturonan acetylesterase YesY (yesY), found in Bacillus subtilis (strain 168).